The following is a 303-amino-acid chain: uncharacterized protein (303 aa).

It localises to the cytoplasm. This is an uncharacterized protein from Saccharomyces cerevisiae (strain ATCC 204508 / S288c) (Baker's yeast).